Reading from the N-terminus, the 487-residue chain is Virulence sensor histidine kinase PhoQ (487 aa).

The Cytoplasmic portion of the chain corresponds to 1–16; sequence MNKFARHFLPLSLRVR. The helical transmembrane segment at 17 to 37 threads the bilayer; the sequence is FLLATAGVVLVLSLAYGIVAL. Residues 38–193 lie on the Periplasmic side of the membrane; sequence VGYSVSFDKT…ELKRSYMVWS (156 aa). A divalent metal cation-binding residues include aspartate 151 and aspartate 152. Residues 194–214 form a helical membrane-spanning segment; that stretch reads WFVYVLAANLLLVIPLLWIAA. Residues 215-266 form the HAMP domain; that stretch reads WWSLRPIEALAREVRELEDHHREMLNPETTRELTSLVRNLNQLLKSERERYN. The Cytoplasmic portion of the chain corresponds to 215–487; the sequence is WWSLRPIEAL…GRQHPTQKEE (273 aa). One can recognise a Histidine kinase domain in the interval 274–481; it reads DLTHSLKTPL…RMEVVFGRQH (208 aa). Histidine 277 is modified (phosphohistidine; by autocatalysis). Asparagine 386 serves as a coordination point for Mg(2+). Residues 386-394, 416-421, and 435-447 contribute to the ATP site; these read NVLDNACKY, DDGPGI, and RADT…GVGL. Glutamine 443 provides a ligand contact to Mg(2+).

In terms of assembly, homodimer.

Its subcellular location is the cell inner membrane. It carries out the reaction ATP + protein L-histidine = ADP + protein N-phospho-L-histidine.. Member of the two-component regulatory system PhoP/PhoQ which regulates the expression of genes involved in virulence and resistance to host defense antimicrobial peptides. In low periplasmic Mg(2+), PhoQ functions as a membrane-associated protein kinase that undergoes autophosphorylation and subsequently transfers the phosphate to PhoP, which results in the expression of PhoP-activated genes (PAG) and repression of PhoP-repressed genes (PRG). In high periplasmic Mg(2+), acts as a protein phosphatase that dephosphorylates phospho-PhoP, which results in the repression of PAG and may lead to expression of some PRG. Promotes intramacrophage survival of S.typhi. Is required to enhance bacterial resistance to bile in the human intestinal cells. The sequence is that of Virulence sensor histidine kinase PhoQ (phoQ) from Salmonella typhi.